The primary structure comprises 356 residues: uncharacterized protein (356 aa).

Helical transmembrane passes span F2–L22, A35–Y55, F74–V94, I99–L119, V124–V144, and I154–I174. The region spanning Q218–I353 is the GGDEF domain.

The protein resides in the cell membrane. This is an uncharacterized protein from Staphylococcus aureus (strain bovine RF122 / ET3-1).